The sequence spans 39 residues: Photosystem II reaction center protein Y (39 aa).

Residues 4 to 24 (RVIVVVSPLLIAATWAAINIG) traverse the membrane as a helical segment.

It belongs to the PsbY family. In terms of assembly, PSII is composed of 1 copy each of membrane proteins PsbA, PsbB, PsbC, PsbD, PsbE, PsbF, PsbH, PsbI, PsbJ, PsbK, PsbL, PsbM, PsbT, PsbX, PsbY, PsbZ, Psb30/Ycf12, peripheral proteins PsbO, CyanoQ (PsbQ), PsbU, PsbV and a large number of cofactors. It forms dimeric complexes.

The protein localises to the cellular thylakoid membrane. Its function is as follows. Loosely associated component of the core of photosystem II (PSII), it is not always seen in crystals. PSII is a light-driven water plastoquinone oxidoreductase, using light energy to abstract electrons from H(2)O, generating a proton gradient subsequently used for ATP formation. In Synechocystis sp. (strain ATCC 27184 / PCC 6803 / Kazusa), this protein is Photosystem II reaction center protein Y.